The sequence spans 319 residues: Nucleotide-binding protein Mvan_2698 (319 aa).

Positions 1-12 (MTEQGMHQELRE) are enriched in basic and acidic residues. A disordered region spans residues 1 to 26 (MTEQGMHQELREGAGTAGDEGGLEAA). 43 to 50 (GLSGAGRG) is a binding site for ATP. 94–97 (DVRS) contributes to the GTP binding site.

The protein belongs to the RapZ-like family.

Displays ATPase and GTPase activities. The chain is Nucleotide-binding protein Mvan_2698 from Mycolicibacterium vanbaalenii (strain DSM 7251 / JCM 13017 / BCRC 16820 / KCTC 9966 / NRRL B-24157 / PYR-1) (Mycobacterium vanbaalenii).